The sequence spans 480 residues: Chromosomal replication initiator protein DnaA (480 aa).

A domain I, interacts with DnaA modulators region spans residues 1–71 (MRHDALFERV…TTLVQQEDSE (71 aa)). Residues 71–137 (EILKVEILVR…RPVQAPLFGS (67 aa)) form a domain II region. The tract at residues 138-360 (PLDQRYGFDS…GAFNQLLFRR (223 aa)) is domain III, AAA+ region. 4 residues coordinate ATP: Gly-184, Gly-186, Lys-187, and Thr-188. Residues 361–480 (SFEPQLSIER…IELLKRLINE (120 aa)) are domain IV, binds dsDNA.

It belongs to the DnaA family. Oligomerizes as a right-handed, spiral filament on DNA at oriC.

Its subcellular location is the cytoplasm. In terms of biological role, plays an essential role in the initiation and regulation of chromosomal replication. ATP-DnaA binds to the origin of replication (oriC) to initiate formation of the DNA replication initiation complex once per cell cycle. Binds the DnaA box (a 9 base pair repeat at the origin) and separates the double-stranded (ds)DNA. Forms a right-handed helical filament on oriC DNA; dsDNA binds to the exterior of the filament while single-stranded (ss)DNA is stabiized in the filament's interior. The ATP-DnaA-oriC complex binds and stabilizes one strand of the AT-rich DNA unwinding element (DUE), permitting loading of DNA polymerase. After initiation quickly degrades to an ADP-DnaA complex that is not apt for DNA replication. Binds acidic phospholipids. This is Chromosomal replication initiator protein DnaA from Rhizobium meliloti (strain 1021) (Ensifer meliloti).